Reading from the N-terminus, the 459-residue chain is Glycosyl hydrolase family 109 protein 1 (459 aa).

A signal peptide (tat-type signal) is located at residues 1-31 (MHNIHRRHFLKAAGAVTAGLVTANIALNANA). NAD(+) is bound by residues 64–65 (ER), aspartate 86, 135–138 (WEWH), 155–156 (EV), and asparagine 184. Residues tyrosine 213, arginine 232, 244 to 247 (YPTH), and tyrosine 326 each bind substrate. Residue tyrosine 244 participates in NAD(+) binding.

The protein belongs to the Gfo/Idh/MocA family. Glycosyl hydrolase 109 subfamily. NAD(+) serves as cofactor. Predicted to be exported by the Tat system. The position of the signal peptide cleavage has not been experimentally proven.

Functionally, glycosidase. The protein is Glycosyl hydrolase family 109 protein 1 of Shewanella sp. (strain MR-4).